Here is a 567-residue protein sequence, read N- to C-terminus: Malate synthase, glyoxysomal (567 aa).

The active-site Proton acceptor is arginine 182. Aspartate 468 serves as the catalytic Proton donor. The Microbody targeting signal motif lies at 565–567 (SRL).

This sequence belongs to the malate synthase family.

It localises to the glyoxysome. The enzyme catalyses glyoxylate + acetyl-CoA + H2O = (S)-malate + CoA + H(+). Its pathway is carbohydrate metabolism; glyoxylate cycle; (S)-malate from isocitrate: step 2/2. In Ricinus communis (Castor bean), this protein is Malate synthase, glyoxysomal.